The sequence spans 374 residues: Flagellar P-ring protein (374 aa).

Residues 1–29 (MPGVGISRIVRIAVAALVALAPLMTPAHA) form the signal peptide.

This sequence belongs to the FlgI family. As to quaternary structure, the basal body constitutes a major portion of the flagellar organelle and consists of four rings (L,P,S, and M) mounted on a central rod.

It localises to the periplasm. Its subcellular location is the bacterial flagellum basal body. In terms of biological role, assembles around the rod to form the L-ring and probably protects the motor/basal body from shearing forces during rotation. The protein is Flagellar P-ring protein of Nitrobacter hamburgensis (strain DSM 10229 / NCIMB 13809 / X14).